Here is a 341-residue protein sequence, read N- to C-terminus: Glycerol-3-phosphate dehydrogenase [NAD(P)+] (341 aa).

NADPH contacts are provided by serine 14, phenylalanine 15, arginine 35, and lysine 108. 2 residues coordinate sn-glycerol 3-phosphate: lysine 108 and glycine 136. Residue alanine 140 participates in NADPH binding. Residues lysine 191, aspartate 244, serine 254, arginine 255, and asparagine 256 each contribute to the sn-glycerol 3-phosphate site. The Proton acceptor role is filled by lysine 191. Arginine 255 serves as a coordination point for NADPH. 2 residues coordinate NADPH: valine 279 and glutamate 281.

It belongs to the NAD-dependent glycerol-3-phosphate dehydrogenase family.

It localises to the cytoplasm. The enzyme catalyses sn-glycerol 3-phosphate + NAD(+) = dihydroxyacetone phosphate + NADH + H(+). It catalyses the reaction sn-glycerol 3-phosphate + NADP(+) = dihydroxyacetone phosphate + NADPH + H(+). It participates in membrane lipid metabolism; glycerophospholipid metabolism. Catalyzes the reduction of the glycolytic intermediate dihydroxyacetone phosphate (DHAP) to sn-glycerol 3-phosphate (G3P), the key precursor for phospholipid synthesis. The polypeptide is Glycerol-3-phosphate dehydrogenase [NAD(P)+] (Pseudomonas fluorescens (strain ATCC BAA-477 / NRRL B-23932 / Pf-5)).